Here is a 104-residue protein sequence, read N- to C-terminus: MHLHLRGICLVLAVASSSSSALAADAGHGADLAKRWCASCHVVANGQAVASADVPSFASVARRPDFSSEKLAFFLLDPHPKMPSFPLSRTEAGDIAAYIGSLRP.

Positions 1–23 (MHLHLRGICLVLAVASSSSSALA) are cleaved as a signal peptide. 4 residues coordinate heme c: C37, C40, H41, and M82.

This sequence belongs to the cytochrome c family. Monoheme monomer. Has the tendency to dimerize. Binds 1 heme c group covalently per subunit.

The protein localises to the periplasm. In Bradyrhizobium diazoefficiens (strain JCM 10833 / BCRC 13528 / IAM 13628 / NBRC 14792 / USDA 110), this protein is Cytochrome c-552 (cycB).